Reading from the N-terminus, the 510-residue chain is 3,4-dihydroxyphenylacetaldehyde synthase (510 aa).

Residue asparagine 192 is part of the active site. Lysine 303 carries the N6-(pyridoxal phosphate)lysine modification.

It belongs to the group II decarboxylase family. Requires pyridoxal 5'-phosphate as cofactor.

It catalyses the reaction L-dopa + O2 + H2O + H(+) = 3,4-dihydroxyphenylacetaldehyde + H2O2 + NH4(+) + CO2. Catalyzes the decarboxylation-oxidative deamination of L-3,4-dihydroxyphenylalanine (L-DOPA) to 3,4-dihydroxylphenylacetaldehyde (DHPAA). Involved in cuticle development. Probably responsible for the protein cross-linking during the development of flexible cuticles. The chain is 3,4-dihydroxyphenylacetaldehyde synthase (amd) from Drosophila melanogaster (Fruit fly).